The chain runs to 199 residues: MIALLTGKLAYKSPEFIILDVNGVGYQVHIPFSTYYTLPVEGGALSLQIHTSVKEDAINLYGFRTQQEKELFQLLIGVSGVGPKLATGILSNSEPSELADSLVNGNLARLSAIPGIGKKTAERLVLELKEKMKKLGLAQPQAGGTTAPAKQEIRDDVLSALINLGYKEAVVQKALAELKVTEDATVELVLKQALKILMK.

The interval 1 to 64 (MIALLTGKLA…EDAINLYGFR (64 aa)) is domain I. Residues 65-143 (TQQEKELFQL…KLGLAQPQAG (79 aa)) are domain II. The segment at 144 to 148 (GTTAP) is flexible linker. The domain III stretch occupies residues 149-199 (AKQEIRDDVLSALINLGYKEAVVQKALAELKVTEDATVELVLKQALKILMK).

Belongs to the RuvA family. As to quaternary structure, homotetramer. Forms an RuvA(8)-RuvB(12)-Holliday junction (HJ) complex. HJ DNA is sandwiched between 2 RuvA tetramers; dsDNA enters through RuvA and exits via RuvB. An RuvB hexamer assembles on each DNA strand where it exits the tetramer. Each RuvB hexamer is contacted by two RuvA subunits (via domain III) on 2 adjacent RuvB subunits; this complex drives branch migration. In the full resolvosome a probable DNA-RuvA(4)-RuvB(12)-RuvC(2) complex forms which resolves the HJ.

The protein resides in the cytoplasm. The RuvA-RuvB-RuvC complex processes Holliday junction (HJ) DNA during genetic recombination and DNA repair, while the RuvA-RuvB complex plays an important role in the rescue of blocked DNA replication forks via replication fork reversal (RFR). RuvA specifically binds to HJ cruciform DNA, conferring on it an open structure. The RuvB hexamer acts as an ATP-dependent pump, pulling dsDNA into and through the RuvAB complex. HJ branch migration allows RuvC to scan DNA until it finds its consensus sequence, where it cleaves and resolves the cruciform DNA. The sequence is that of Holliday junction branch migration complex subunit RuvA from Citrifermentans bemidjiense (strain ATCC BAA-1014 / DSM 16622 / JCM 12645 / Bem) (Geobacter bemidjiensis).